A 295-amino-acid polypeptide reads, in one-letter code: Cytidine deaminase (295 aa).

2 consecutive CMP/dCMP-type deaminase domains span residues T48–A168 and K187–A295. Position 89–91 (N89–E91) interacts with substrate. H102 is a binding site for Zn(2+). Residue E104 is the Proton donor of the active site. Zn(2+) is bound by residues C129 and C132.

The protein belongs to the cytidine and deoxycytidylate deaminase family. In terms of assembly, homodimer. Zn(2+) serves as cofactor.

The catalysed reaction is cytidine + H2O + H(+) = uridine + NH4(+). The enzyme catalyses 2'-deoxycytidine + H2O + H(+) = 2'-deoxyuridine + NH4(+). This enzyme scavenges exogenous and endogenous cytidine and 2'-deoxycytidine for UMP synthesis. The polypeptide is Cytidine deaminase (Photobacterium profundum (strain SS9)).